The following is a 250-amino-acid chain: Kallikrein-14 (250 aa).

Positions Met-1 to Ser-18 are cleaved as a signal peptide. Residues Gln-19–Lys-23 constitute a propeptide, activation peptide. The Peptidase S1 domain occupies Ile-24 to Gln-248. Cys-51 and Cys-67 are disulfide-bonded. Catalysis depends on charge relay system residues His-66 and Asp-110. 3 disulfides stabilise this stretch: Cys-142/Cys-209, Cys-174/Cys-188, and Cys-199/Cys-224. Ser-203 serves as the catalytic Charge relay system.

This sequence belongs to the peptidase S1 family. Kallikrein subfamily. In terms of processing, proteolytic cleavage of the activation peptide produces the active enzyme.

It is found in the secreted. The protein resides in the extracellular space. With respect to regulation, inhibited by SERPINA1, SERPINC1, SERPINE1, SERPINF2, aprotinin, soybean, trypsin inhibitor and leupeptin. Inhibited by serine protease inhibitor SPINK5. Has an autoproteolytic activity which may have a regulatory effect. Activated by citrate and inhibited by zinc and to a lower extent by manganese. In terms of biological role, serine-type endopeptidase with a dual trypsin-like and chymotrypsin-like substrate specificity. May activate/inactivate the proteinase-activated receptors F2R, F2RL1 and F2RL3 and other kallikreins including KLK1, KLK3, KLK5 and KLK11. May function in seminal clot liquefaction through direct cleavage of the semenogelin SEMG1 and SEMG2 and activation of KLK3. May function through desmoglein DSG1 cleavage in epidermal desquamation a process by which the most superficial corneocytes are shed from the skin surface. May be involved in several aspects of tumor progression including growth, invasion and angiogenesis. This Mus musculus (Mouse) protein is Kallikrein-14 (Klk14).